We begin with the raw amino-acid sequence, 811 residues long: Leucine--tRNA ligase (811 aa).

A 'HIGH' region motif is present at residues 38–49 (SYPSGSNLHAGH). Residues 570–574 (KMSKS) carry the 'KMSKS' region motif. Lys573 contacts ATP.

The protein belongs to the class-I aminoacyl-tRNA synthetase family.

It is found in the cytoplasm. The enzyme catalyses tRNA(Leu) + L-leucine + ATP = L-leucyl-tRNA(Leu) + AMP + diphosphate. This chain is Leucine--tRNA ligase, found in Clostridium kluyveri (strain ATCC 8527 / DSM 555 / NBRC 12016 / NCIMB 10680 / K1).